Consider the following 92-residue polypeptide: Small ribosomal subunit protein bS18 (92 aa).

Residues Met-1–Pro-27 form a disordered region. Basic residues predominate over residues Pro-12–Lys-22.

It belongs to the bacterial ribosomal protein bS18 family. In terms of assembly, part of the 30S ribosomal subunit. Forms a tight heterodimer with protein bS6.

In terms of biological role, binds as a heterodimer with protein bS6 to the central domain of the 16S rRNA, where it helps stabilize the platform of the 30S subunit. This chain is Small ribosomal subunit protein bS18, found in Deinococcus deserti (strain DSM 17065 / CIP 109153 / LMG 22923 / VCD115).